Here is a 170-residue protein sequence, read N- to C-terminus: Thialysine N-epsilon-acetyltransferase (170 aa).

In terms of domain architecture, N-acetyltransferase spans 4–166 (VMIREAKEGD…FRFEGEAMRE (163 aa)). 27–28 (YE) contributes to the substrate binding site. Lysine 29 bears the N6-acetyllysine mark. Glutamate 92 is a substrate binding site. Residues 94–96 (IYV), 102–107 (GQGIGS), 133–135 (NKR), and tyrosine 140 each bind acetyl-CoA. The active-site Proton donor is tyrosine 140. Residue glutamate 152 coordinates substrate.

The protein belongs to the acetyltransferase family. Homodimer.

The protein resides in the cytoplasm. The catalysed reaction is S-(2-aminoethyl)-L-cysteine + acetyl-CoA = S-(2-acetamidoethyl)-L-cysteine + CoA + H(+). It catalyses the reaction an alkane-alpha,omega-diamine + acetyl-CoA = an N-acetylalkane-alpha,omega-diamine + CoA + H(+). Its function is as follows. Catalyzes the N-acetylation of the amino acid thialysine (S-(2-aminoethyl)-L-cysteine), a L-lysine analog with the 4-methylene group substituted with a sulfur. May also catalyze acetylation of polyamines, such as norspermidine, spermidine or spermine. However, ability to acetylate polyamines is weak, suggesting that it does not act as a diamine acetyltransferase in vivo. This chain is Thialysine N-epsilon-acetyltransferase, found in Bos taurus (Bovine).